The following is a 294-amino-acid chain: Probable 2-(5''-triphosphoribosyl)-3'-dephosphocoenzyme-A synthase (294 aa).

This sequence belongs to the CitG/MdcB family.

The catalysed reaction is 3'-dephospho-CoA + ATP = 2'-(5''-triphospho-alpha-D-ribosyl)-3'-dephospho-CoA + adenine. The chain is Probable 2-(5''-triphosphoribosyl)-3'-dephosphocoenzyme-A synthase from Streptococcus pyogenes serotype M18 (strain MGAS8232).